We begin with the raw amino-acid sequence, 149 residues long: Transcription antitermination protein NusB (149 aa).

Belongs to the NusB family.

Its function is as follows. Involved in transcription antitermination. Required for transcription of ribosomal RNA (rRNA) genes. Binds specifically to the boxA antiterminator sequence of the ribosomal RNA (rrn) operons. The polypeptide is Transcription antitermination protein NusB (Hahella chejuensis (strain KCTC 2396)).